The sequence spans 473 residues: Probable transporter MCH2 (473 aa).

Topologically, residues 1 to 37 are cytoplasmic; that stretch reads MSEERHEDHHRDVENKLNLNGKDDINGNTSISIEVPD. Residues 38–58 traverse the membrane as a helical segment; it reads GGYGWFILLAFILYNFSTWGA. Over 59–83 the chain is Extracellular; it reads NSGYAIYLAHYLENNTFAGGSKLDY. A glycan (N-linked (GlcNAc...) asparagine) is linked at N72. A helical membrane pass occupies residues 84–105; it reads ASIGGLAFSCGLFFAPVITWLY. Residues 106 to 111 lie on the Cytoplasmic side of the membrane; it reads HIFSIQ. Residues 112–135 traverse the membrane as a helical segment; that stretch reads FIIGLGILFQGAALLLAAFSVTLW. Topologically, residues 136–141 are extracellular; sequence EIYLTQ. Residues 142–163 traverse the membrane as a helical segment; that stretch reads GVLIGFGLAFIFIPSVTLIPLW. Topologically, residues 164–169 are cytoplasmic; sequence FRNKRS. A helical transmembrane segment spans residues 170-186; that stretch reads LASGIGTAGSGLGGIVF. At 187–200 the chain is on the extracellular side; the sequence is NLGMQSILQKRGVK. Residues 201-220 traverse the membrane as a helical segment; it reads WALIAQCIICTSLSTIALML. Topologically, residues 221-243 are cytoplasmic; that stretch reads TRTTHQGLRQHKRSYKFELLDYD. The chain crosses the membrane as a helical span at residues 244 to 268; it reads VLSNFAVWLLFGFVSFAMLGYVVLL. The Extracellular portion of the chain corresponds to 269–286; that stretch reads YSLSDFTVSLGYTSKQGS. A helical membrane pass occupies residues 287-304; sequence YVSCMVSVGSLLGRPIVG. At 305-312 the chain is on the cytoplasmic side; that stretch reads HIADKYGS. A helical transmembrane segment spans residues 313-332; it reads LTVGMILHLVMAILCWAMWI. The Extracellular segment spans residues 333–342; it reads PCKNLATAIA. The chain crosses the membrane as a helical span at residues 343–362; that stretch reads FGLLVGSIMGTIWPTIASIV. Residues 363-370 lie on the Cytoplasmic side of the membrane; the sequence is TRIVGLQK. The chain crosses the membrane as a helical span at residues 371-394; the sequence is LPGTFGSTWIFMAAFALVAPIIGL. Residues 395–408 are Extracellular-facing; that stretch reads ELRSTDTNGNDYYR. The helical transmembrane segment at 409–433 threads the bilayer; that stretch reads TAIFVGFAYFGVSLCQWLLRGFIIA. The Cytoplasmic segment spans residues 434–473; the sequence is RDEIAVREAYSADQNELHLNVKLSHMSKCLFRYKQLPRRV.

It belongs to the major facilitator superfamily. Monocarboxylate porter (TC 2.A.1.13) family.

The protein resides in the membrane. In terms of biological role, probable transporter. Does not act in the transport of monocarboxylic acids across the plasma membrane. The protein is Probable transporter MCH2 (MCH2) of Saccharomyces cerevisiae (strain ATCC 204508 / S288c) (Baker's yeast).